Here is a 367-residue protein sequence, read N- to C-terminus: Septin-1 (367 aa).

One can recognise a Septin-type G domain in the interval 22 to 296 (KGFDFTLMVA…EGYRARCLQS (275 aa)). The segment at 32 to 39 (GESGLGKS) is G1 motif. GTP is bound by residues 32–39 (GESGLGKS), Thr66, Gly92, and 171–179 (KADALMPKE). The interval 89–92 (DTPG) is G3 motif. The G4 motif stretch occupies residues 170–173 (GKAD). Ser206 bears the Phosphoserine mark. The GTP site is built by Gly229 and Arg245. Ser248 is modified (phosphoserine; by AURKB). Thr251 is modified (phosphothreonine). Ser307 and Ser315 each carry phosphoserine; by AURKB.

This sequence belongs to the TRAFAC class TrmE-Era-EngA-EngB-Septin-like GTPase superfamily. Septin GTPase family. In terms of assembly, septins polymerize into heterooligomeric protein complexes that form filaments, and can associate with cellular membranes, actin filaments and microtubules. GTPase activity is required for filament formation. Interacts with AURKB.

The protein resides in the cytoplasm. Its subcellular location is the cytoskeleton. It is found in the microtubule organizing center. It localises to the centrosome. The protein localises to the midbody. In terms of biological role, filament-forming cytoskeletal GTPase. May play a role in cytokinesis (Potential). The chain is Septin-1 from Bos taurus (Bovine).